A 189-amino-acid polypeptide reads, in one-letter code: T-cell surface glycoprotein CD3 epsilon chain (189 aa).

The signal sequence occupies residues 1–21; sequence MRWNTFWGILCLSLLAVGTCQ. Positions 23-99 constitute an Ig-like domain; sequence DAENIEYKVS…KNTYLYLKAR (77 aa). Residues 23–108 are Extracellular-facing; sequence DAENIEYKVS…RVCEYCVEVD (86 aa). Cys-42 and Cys-83 are oxidised to a cystine. Residues 109 to 134 form a helical membrane-spanning segment; sequence LTAVAIIIIVDICITLGLLMVIYYWS. Topologically, residues 135-189 are cytoplasmic; that stretch reads KNRKAKAKPVTRGTGAGSRPRGQNKERPPPVPNPDYEPIRKGQRDLYSGLNQRAV. Positions 143 to 189 are disordered; the sequence is PVTRGTGAGSRPRGQNKERPPPVPNPDYEPIRKGQRDLYSGLNQRAV. An NUMB-binding region region spans residues 157 to 174; that stretch reads QNKERPPPVPNPDYEPIR. The 28-residue stretch at 160–187 folds into the ITAM domain; that stretch reads ERPPPVPNPDYEPIRKGQRDLYSGLNQR. Positions 161-168 are proline-rich sequence; it reads RPPPVPNP. A phosphotyrosine mark is found at Tyr-170 and Tyr-181.

As to quaternary structure, the TCR-CD3 complex is composed of a CD3D/CD3E and a CD3G/CD3E heterodimers that preferentially associate with TCRalpha and TCRbeta, respectively, to form TCRalpha/CD3E/CD3G and TCRbeta/CD3G/CD3E trimers. In turn, the hexamer interacts with CD3Z homodimer to form the TCR-CD3 complex. Alternatively, TCRalpha and TCRbeta can be replaced by TCRgamma and TCRdelta. Interacts with CD6. Interacts (via Proline-rich sequence) with NCK1; the interaction is ligand dependent but independent of tyrosine kinase activation. In terms of processing, phosphorylated on Tyr residues after T-cell receptor triggering by LCK in association with CD4/CD8.

The protein resides in the cell membrane. In terms of biological role, part of the TCR-CD3 complex present on T-lymphocyte cell surface that plays an essential role in adaptive immune response. When antigen presenting cells (APCs) activate T-cell receptor (TCR), TCR-mediated signals are transmitted across the cell membrane by the CD3 chains CD3D, CD3E, CD3G and CD3Z. All CD3 chains contain immunoreceptor tyrosine-based activation motifs (ITAMs) in their cytoplasmic domain. Upon TCR engagement, these motifs become phosphorylated by Src family protein tyrosine kinases LCK and FYN, resulting in the activation of downstream signaling pathways. In addition of this role of signal transduction in T-cell activation, CD3E plays an essential role in correct T-cell development. Also participates in internalization and cell surface down-regulation of TCR-CD3 complexes via endocytosis sequences present in CD3E cytosolic region. In addition to its role as a TCR coreceptor, it serves as a receptor for ITPRIPL1. Ligand recognition inhibits T-cell activation by promoting interaction with NCK1, which prevents CD3E-ZAP70 interaction and blocks the ERK-NFkB signaling cascade and calcium influx. This Mus musculus (Mouse) protein is T-cell surface glycoprotein CD3 epsilon chain (Cd3e).